The primary structure comprises 162 residues: Heat shock protein beta-6 (162 aa).

The interval 1–72 (MEIPVPVQPS…PTAQVSTDSG (72 aa)) is involved in stabilization of the HSPB1:HSBP6 heterodimer. Serine 16 bears the Phosphoserine mark. A sHSP domain is found at 56–162 (RAPSVALPTA…AQLPSPPAAK (107 aa)). Glutamine 66 is modified (deamidated glutamine). Serine 157 bears the Phosphoserine mark.

The protein belongs to the small heat shock protein (HSP20) family. Homodimer. Small heat shock proteins form high molecular mass oligomers containing variable number of monomers; these oligomers display a very flexible quaternary structure easily exchanging their subunits. Heterooligomer with HSPB1; formed through oligomerization of HSPB1:HSBP6 dimers; subunit exchange leads to formation of at least two different heterooligomeric complexes, differing in variable quantities of HSPB1 and HSPB6 homodimers in addition to HSPB1:HSPB6 heterodimers. Heterooligomer with CRYAB; large heterooligomers consist of CRYAB homodimers and HSPB5:HSPB6 heterodimers but lacking HSPB6 homodimers. Interacts with BAG3. Interacts (phosphorylated) with YWHAZ. Interacts with PDE4A and PDE4D; required for maintenance of the non-phosphorylated state of HSPB6 under basal conditions. Interacts with KDR. Interacts with PRKD1. Phosphorylated at Ser-16 by PKA and probably PKD1K; required to protect cardiomyocytes from apoptosis.

Its subcellular location is the cytoplasm. The protein resides in the nucleus. It is found in the secreted. Small heat shock protein which functions as a molecular chaperone probably maintaining denatured proteins in a folding-competent state. Seems to have versatile functions in various biological processes. Plays a role in regulating muscle function such as smooth muscle vasorelaxation and cardiac myocyte contractility. May regulate myocardial angiogenesis implicating KDR. Overexpression mediates cardioprotection and angiogenesis after induced damage. Stabilizes monomeric YWHAZ thereby supporting YWHAZ chaperone-like activity. The polypeptide is Heat shock protein beta-6 (Hspb6) (Mus musculus (Mouse)).